We begin with the raw amino-acid sequence, 297 residues long: Mycothiol acetyltransferase (297 aa).

2 consecutive N-acetyltransferase domains span residues 7–156 (VFSD…VTIR) and 153–297 (VTIR…PPPH). Glu38 is a 1D-myo-inositol 2-(L-cysteinylamino)-2-deoxy-alpha-D-glucopyranoside binding site. 79 to 81 (VVV) contacts acetyl-CoA. 3 residues coordinate 1D-myo-inositol 2-(L-cysteinylamino)-2-deoxy-alpha-D-glucopyranoside: Glu180, Lys219, and Glu227. Acetyl-CoA-binding positions include 231–233 (VGV) and 238–244 (QGLGLGR). Residue Tyr265 participates in 1D-myo-inositol 2-(L-cysteinylamino)-2-deoxy-alpha-D-glucopyranoside binding. An acetyl-CoA-binding site is contributed by 270-275 (NRPALR).

This sequence belongs to the acetyltransferase family. MshD subfamily. Monomer.

It carries out the reaction 1D-myo-inositol 2-(L-cysteinylamino)-2-deoxy-alpha-D-glucopyranoside + acetyl-CoA = mycothiol + CoA + H(+). Catalyzes the transfer of acetyl from acetyl-CoA to desacetylmycothiol (Cys-GlcN-Ins) to form mycothiol. The polypeptide is Mycothiol acetyltransferase (Thermomonospora curvata (strain ATCC 19995 / DSM 43183 / JCM 3096 / KCTC 9072 / NBRC 15933 / NCIMB 10081 / Henssen B9)).